The sequence spans 305 residues: MSPPVSQVVVVGGTHGNEMSGVCLAKHWLQDPSELRRKSFTADILLANPIAVERCVRYIDRDLNRSFSHELLSASASESDSYEVKRAREIYQKYGPKQSSLNFVIDLHNTTSNMGTTILLFKGDNFALHLANYLKTKCVDPSFPCHILLIDIPEQGHVHLQSMGKHSISLELGPQPQGVVRTDVLARMKVLVNSSLDFLDLFNQGTEFPSFEAEVHQVLHKADFPRGADGEIQAFIHSELQDKDYLPLKPGDPIFQRLNGDDILYNGEKLIYPVFINESAYYEKKVAFIATEKKHCFVPALKLQN.

His-15 and Glu-18 together coordinate Zn(2+). Residues Arg-57 and 64-65 contribute to the substrate site; that span reads NR. Position 108 (His-108) interacts with Zn(2+). Positions 171 and 281 each coordinate substrate.

The protein belongs to the AspA/AstE family. Aspartoacylase subfamily. In terms of assembly, homotetramer. The cofactor is Zn(2+).

It localises to the apical cell membrane. The protein resides in the cytoplasm. It carries out the reaction an N-acyl-aromatic L-alpha-amino acid + H2O = an aromatic L-alpha-amino acid + a carboxylate. The enzyme catalyses an N-acetyl-L-cysteine-S-conjugate + H2O = an S-substituted L-cysteine + acetate. Plays an important role in deacetylating mercapturic acids in kidney proximal tubules. The protein is N-acyl-aromatic-L-amino acid amidohydrolase (carboxylate-forming) (acy3) of Xenopus laevis (African clawed frog).